Here is a 225-residue protein sequence, read N- to C-terminus: Paired immunoglobulin-like type 2 receptor beta-2 (225 aa).

The first 31 residues, 1-31 (MALLISLPGETPAMAQILLLLSSACLHAGNS), serve as a signal peptide directing secretion. Residues 32–195 (ARSNGGNDFG…NPSLMNLGAM (164 aa)) lie on the Extracellular side of the membrane. 3 N-linked (GlcNAc...) asparagine glycosylation sites follow: Asn-90, Asn-107, and Asn-160. A helical transmembrane segment spans residues 196–216 (VTMLLAKVVVIILVYGWMIFL). Over 217–225 (RWKQRPDPA) the chain is Cytoplasmic.

It is found in the membrane. Paired receptors consist of highly related activating and inhibitory receptors and are widely involved in the regulation of the immune system. PILRB2 is probably a cellular signaling activating receptor that associates with ITAM-bearing adapter molecules on the cell surface. The protein is Paired immunoglobulin-like type 2 receptor beta-2 (Pilrb2) of Mus musculus (Mouse).